A 226-amino-acid chain; its full sequence is DNA mismatch repair protein MutH (226 aa).

The protein belongs to the MutH family.

The protein localises to the cytoplasm. Functionally, sequence-specific endonuclease that cleaves unmethylated GATC sequences. It is involved in DNA mismatch repair. This Actinobacillus pleuropneumoniae serotype 5b (strain L20) protein is DNA mismatch repair protein MutH.